We begin with the raw amino-acid sequence, 836 residues long: DNA gyrase subunit A (836 aa).

The Topo IIA-type catalytic domain occupies 46–510; the sequence is LPDARDGLKP…ISEEIDDESL (465 aa). The active-site O-(5'-phospho-DNA)-tyrosine intermediate is the Tyr134. The GyrA-box motif lies at 537 to 543; that stretch reads QHRGGVG.

This sequence belongs to the type II topoisomerase GyrA/ParC subunit family. Heterotetramer, composed of two GyrA and two GyrB chains. In the heterotetramer, GyrA contains the active site tyrosine that forms a transient covalent intermediate with DNA, while GyrB binds cofactors and catalyzes ATP hydrolysis.

The protein resides in the cytoplasm. The enzyme catalyses ATP-dependent breakage, passage and rejoining of double-stranded DNA.. A type II topoisomerase that negatively supercoils closed circular double-stranded (ds) DNA in an ATP-dependent manner to modulate DNA topology and maintain chromosomes in an underwound state. Negative supercoiling favors strand separation, and DNA replication, transcription, recombination and repair, all of which involve strand separation. Also able to catalyze the interconversion of other topological isomers of dsDNA rings, including catenanes and knotted rings. Type II topoisomerases break and join 2 DNA strands simultaneously in an ATP-dependent manner. In Mycoplasma genitalium (strain ATCC 33530 / DSM 19775 / NCTC 10195 / G37) (Mycoplasmoides genitalium), this protein is DNA gyrase subunit A.